Consider the following 365-residue polypeptide: 3-dehydroquinate synthase (365 aa).

NAD(+) contacts are provided by residues 106–110 (GVIGD), 130–131 (TT), lysine 142, lysine 151, and 169–172 (FFAT). Residues glutamate 184, histidine 247, and histidine 264 each contribute to the Zn(2+) site.

Belongs to the sugar phosphate cyclases superfamily. Dehydroquinate synthase family. Requires NAD(+) as cofactor. Co(2+) serves as cofactor. The cofactor is Zn(2+).

The protein resides in the cytoplasm. The catalysed reaction is 7-phospho-2-dehydro-3-deoxy-D-arabino-heptonate = 3-dehydroquinate + phosphate. The protein operates within metabolic intermediate biosynthesis; chorismate biosynthesis; chorismate from D-erythrose 4-phosphate and phosphoenolpyruvate: step 2/7. Catalyzes the conversion of 3-deoxy-D-arabino-heptulosonate 7-phosphate (DAHP) to dehydroquinate (DHQ). The chain is 3-dehydroquinate synthase from Listeria innocua serovar 6a (strain ATCC BAA-680 / CLIP 11262).